We begin with the raw amino-acid sequence, 141 residues long: Hemoglobin subunit alpha-D (141 aa).

Residues 1–141 (MLTADDKKLI…VAAVLAEKYR (141 aa)) enclose the Globin domain. Residues H58 and H87 each contribute to the heme b site.

It belongs to the globin family. As to quaternary structure, heterotetramer of two alpha-D chains and two beta chains. As to expression, red blood cells.

Involved in oxygen transport from the lung to the various peripheral tissues. The polypeptide is Hemoglobin subunit alpha-D (HBAD) (Aegypius monachus (Cinereous vulture)).